The primary structure comprises 738 residues: Transcription activator of gluconeogenesis SMAC_06113 (738 aa).

Residues 1–65 (MPDDVGPAEA…KYDPKDPLRP (65 aa)) form a disordered region. 2 stretches are compositionally biased toward basic and acidic residues: residues 28–39 (ATTKDDDEKMAE) and 51–64 (GDQKKKYDPKDPLR). The zn(2)-C6 fungal-type DNA-binding region spans 74–102 (CYACQRAHLTCGDERPCQRCIKRGLAEAC). Disordered stretches follow at residues 255-278 (SSGAAETPPRDPSISQQGTAGDVG), 328-404 (HAYA…KRQR), 530-579 (GTNS…KEQP), and 636-673 (SVPTTAGGSGSSNGTVVNGGPDSSPAGKTERERSTGAN). 2 stretches are compositionally biased toward polar residues: residues 337-351 (TSLQSPSTENNSPQP) and 530-540 (GTNSDTLSVSS). The PAS domain occupies 475-546 (ALFEHEEFMH…SVSSKGGRGG (72 aa)). Composition is skewed to low complexity over residues 568-579 (QQQQSQQQKEQP) and 636-655 (SVPTTAGGSGSSNGTVVNGG).

Belongs to the ERT1/acuK family.

It localises to the nucleus. Functionally, transcription factor which regulates nonfermentable carbon utilization. Activator of gluconeogenetic genes. The polypeptide is Transcription activator of gluconeogenesis SMAC_06113 (Sordaria macrospora (strain ATCC MYA-333 / DSM 997 / K(L3346) / K-hell)).